We begin with the raw amino-acid sequence, 411 residues long: Serine/threonine transporter SstT (411 aa).

The next 8 helical transmembrane spans lie at Ile17–Ala37, Leu41–Val61, Ile79–Phe99, Ala138–Leu158, Leu189–Gly209, Leu214–Phe234, Met295–Ile315, and Val327–Ile347.

The protein belongs to the dicarboxylate/amino acid:cation symporter (DAACS) (TC 2.A.23) family.

It is found in the cell inner membrane. It catalyses the reaction L-serine(in) + Na(+)(in) = L-serine(out) + Na(+)(out). It carries out the reaction L-threonine(in) + Na(+)(in) = L-threonine(out) + Na(+)(out). Functionally, involved in the import of serine and threonine into the cell, with the concomitant import of sodium (symport system). The chain is Serine/threonine transporter SstT from Serratia proteamaculans (strain 568).